The chain runs to 135 residues: Large ribosomal subunit protein uL16c (135 aa).

Residues 1–17 (MLSPKRTKFRKQHRNRM) are compositionally biased toward basic residues. Residues 1 to 22 (MLSPKRTKFRKQHRNRMNGKAS) form a disordered region.

Belongs to the universal ribosomal protein uL16 family. In terms of assembly, part of the 50S ribosomal subunit.

It localises to the plastid. Its subcellular location is the chloroplast. This is Large ribosomal subunit protein uL16c from Gracilaria tenuistipitata (Red alga).